Here is a 273-residue protein sequence, read N- to C-terminus: Beta-lactamase OXA-23 (273 aa).

Positions 1–17 are cleaved as a signal peptide; the sequence is MNKYFTCYVVASLFLSG. Residue serine 79 is the Acyl-ester intermediate of the active site. 6 residues coordinate a beta-lactam: serine 79, lysine 82, serine 126, threonine 217, tryptophan 219, and arginine 259. Lysine 82 carries the post-translational modification N6-carboxylysine.

This sequence belongs to the class-D beta-lactamase family. Monomer. In terms of processing, carboxylated on the epsilon-amino group of a lysine, with the resulting carbamate functional group serving as a general base. Probably N-carboxylated at Lys-82 at neutral pH in vivo and undergoes complete N-decarboxylation, at pH 4.1, in vitro.

The protein resides in the periplasm. It carries out the reaction a beta-lactam + H2O = a substituted beta-amino acid. Its activity is regulated as follows. Inhibited by the desmethyl carbapenem, MA-1-206, via a covalent binding to Ser-79. In terms of biological role, class D beta-lactamase which confers resistance to the beta-lactam antibiotics, including ampicillin, and carbapenems such as imipenem and meropenem. Acts via hydrolysis of the beta-lactam ring. Has penicillin-, cephalosporin- and carbapenem-hydrolyzing activities, but lacks ceftazidime-hydrolyzing activity. The polypeptide is Beta-lactamase OXA-23 (Acinetobacter baumannii).